The sequence spans 164 residues: Monothiol glutaredoxin-S10 (164 aa).

In terms of domain architecture, Glutaredoxin spans 60–161; it reads EDSVKRTLAD…TMLSELDIDV (102 aa). A [2Fe-2S] cluster-binding site is contributed by Cys-80.

Belongs to the glutaredoxin family. CPYC subfamily.

The protein localises to the cytoplasm. In terms of biological role, may only reduce GSH-thiol disulfides, but not protein disulfides. This is Monothiol glutaredoxin-S10 (GRXS10) from Oryza sativa subsp. japonica (Rice).